A 95-amino-acid chain; its full sequence is Co-chaperonin GroES (95 aa).

It belongs to the GroES chaperonin family. As to quaternary structure, heptamer of 7 subunits arranged in a ring. Interacts with the chaperonin GroEL.

Its subcellular location is the cytoplasm. In terms of biological role, together with the chaperonin GroEL, plays an essential role in assisting protein folding. The GroEL-GroES system forms a nano-cage that allows encapsulation of the non-native substrate proteins and provides a physical environment optimized to promote and accelerate protein folding. GroES binds to the apical surface of the GroEL ring, thereby capping the opening of the GroEL channel. The chain is Co-chaperonin GroES from Novosphingobium aromaticivorans (strain ATCC 700278 / DSM 12444 / CCUG 56034 / CIP 105152 / NBRC 16084 / F199).